The following is a 51-amino-acid chain: MSKKYELYEVKDGKIVRKNPECVRCSHGIFMADHGDRYACGRCGYTQWKNE.

The Zn(2+) site is built by cysteine 22, cysteine 25, cysteine 40, and cysteine 43. Residues 22-43 (CVRCSHGIFMADHGDRYACGRC) form a C4-type zinc finger.

This sequence belongs to the eukaryotic ribosomal protein eS31 family. In terms of assembly, part of the 30S ribosomal subunit. Zn(2+) serves as cofactor.

In Methanosphaera stadtmanae (strain ATCC 43021 / DSM 3091 / JCM 11832 / MCB-3), this protein is Small ribosomal subunit protein eS31.